We begin with the raw amino-acid sequence, 245 residues long: Protein crossbronx (245 aa).

The region spanning 20–177 (HQEYKILAEY…VQESIAESKA (158 aa)) is the UBC core domain.

This sequence belongs to the ubiquitin-conjugating enzyme family. FTS subfamily.

The polypeptide is Protein crossbronx (cbx) (Drosophila mojavensis (Fruit fly)).